The primary structure comprises 427 residues: Tol-Pal system protein TolB (427 aa).

An N-terminal signal peptide occupies residues 1–25 (MKTFAQLRLLLAAAALALLSFSAQA).

It belongs to the TolB family. As to quaternary structure, the Tol-Pal system is composed of five core proteins: the inner membrane proteins TolA, TolQ and TolR, the periplasmic protein TolB and the outer membrane protein Pal. They form a network linking the inner and outer membranes and the peptidoglycan layer.

The protein resides in the periplasm. Part of the Tol-Pal system, which plays a role in outer membrane invagination during cell division and is important for maintaining outer membrane integrity. The chain is Tol-Pal system protein TolB from Azoarcus sp. (strain BH72).